Here is a 391-residue protein sequence, read N- to C-terminus: Carbamoyl phosphate synthase small chain (391 aa).

The tract at residues 1-202 is CPSase; sequence MTQPAILVLE…AHASAGSGEE (202 aa). L-glutamine-binding residues include serine 47, glycine 254, and glycine 256. A Glutamine amidotransferase type-1 domain is found at 206-391; sequence KVVAYDYGVK…RFVDLMAARA (186 aa). Cysteine 282 functions as the Nucleophile in the catalytic mechanism. Positions 283, 286, 324, 326, and 327 each coordinate L-glutamine. Residues histidine 366 and glutamate 368 contribute to the active site.

Belongs to the CarA family. Composed of two chains; the small (or glutamine) chain promotes the hydrolysis of glutamine to ammonia, which is used by the large (or ammonia) chain to synthesize carbamoyl phosphate. Tetramer of heterodimers (alpha,beta)4.

It catalyses the reaction hydrogencarbonate + L-glutamine + 2 ATP + H2O = carbamoyl phosphate + L-glutamate + 2 ADP + phosphate + 2 H(+). The catalysed reaction is L-glutamine + H2O = L-glutamate + NH4(+). It functions in the pathway amino-acid biosynthesis; L-arginine biosynthesis; carbamoyl phosphate from bicarbonate: step 1/1. Its pathway is pyrimidine metabolism; UMP biosynthesis via de novo pathway; (S)-dihydroorotate from bicarbonate: step 1/3. Small subunit of the glutamine-dependent carbamoyl phosphate synthetase (CPSase). CPSase catalyzes the formation of carbamoyl phosphate from the ammonia moiety of glutamine, carbonate, and phosphate donated by ATP, constituting the first step of 2 biosynthetic pathways, one leading to arginine and/or urea and the other to pyrimidine nucleotides. The small subunit (glutamine amidotransferase) binds and cleaves glutamine to supply the large subunit with the substrate ammonia. This chain is Carbamoyl phosphate synthase small chain, found in Xanthomonas axonopodis pv. citri (strain 306).